Here is a 445-residue protein sequence, read N- to C-terminus: Methionine aminopeptidase 2-1 (445 aa).

A disordered region spans residues 1-99 (MAAQVPTEAL…FPNKAYPKGE (99 aa)). The span at 61–75 (KKKKKRKPKKKKKHP) shows a compositional bias: basic residues. His-198 serves as a coordination point for substrate. 3 residues coordinate a divalent metal cation: Asp-218, Asp-229, and His-298. His-306 serves as a coordination point for substrate. Residues Glu-331 and Glu-426 each coordinate a divalent metal cation.

Belongs to the peptidase M24A family. Methionine aminopeptidase eukaryotic type 2 subfamily. Co(2+) is required as a cofactor. The cofactor is Zn(2+). It depends on Mn(2+) as a cofactor. Fe(2+) serves as cofactor.

It localises to the cytoplasm. It catalyses the reaction Release of N-terminal amino acids, preferentially methionine, from peptides and arylamides.. Its function is as follows. Cotranslationally removes the N-terminal methionine from nascent proteins. The N-terminal methionine is often cleaved when the second residue in the primary sequence is small and uncharged (Met-Ala-, Cys, Gly, Pro, Ser, Thr, or Val). The protein is Methionine aminopeptidase 2-1 of Fusarium vanettenii (strain ATCC MYA-4622 / CBS 123669 / FGSC 9596 / NRRL 45880 / 77-13-4) (Fusarium solani subsp. pisi).